The sequence spans 204 residues: Molybdenum cofactor guanylyltransferase (204 aa).

Residues 12-14, Lys25, Asn53, Asp71, and Asp101 each bind GTP; that span reads LAG. Mg(2+) is bound at residue Asp101.

Belongs to the MobA family. As to quaternary structure, monomer. Mg(2+) serves as cofactor.

The protein resides in the cytoplasm. It catalyses the reaction Mo-molybdopterin + GTP + H(+) = Mo-molybdopterin guanine dinucleotide + diphosphate. Its function is as follows. Transfers a GMP moiety from GTP to Mo-molybdopterin (Mo-MPT) cofactor (Moco or molybdenum cofactor) to form Mo-molybdopterin guanine dinucleotide (Mo-MGD) cofactor. The chain is Molybdenum cofactor guanylyltransferase from Ralstonia nicotianae (strain ATCC BAA-1114 / GMI1000) (Ralstonia solanacearum).